The sequence spans 504 residues: L-carnitine/gamma-butyrobetaine antiporter (504 aa).

The next 12 membrane-spanning stretches (helical) occupy residues 10–30 (IEPKVFFPPLIIVGILCWLTV), 51–71 (WGWAFEWYMVVMLFGWFWLVF), 92–112 (IFMMFASCTSAAVLFWGSIEI), 143–163 (GPLPWATYSFLSVAFAYFFFV), 195–215 (FYLVALIFAMGTSLGLATPLV), 231–251 (LDAIIITCWIILNAICVACGL), 263–283 (SYLSFLMLGWVFIVSGASFIM), 316–336 (WTVFYWAWWVIYAIQMSIFLA), 347–367 (LCFGMVLGLTASTWILWTVLG), 398–418 (WAALPLSTATIWGFFILCFIA), 446–466 (LLVRIGWSILVGIIGIVLLAL), and 475–495 (AIIAGGCPLFFVNIMVTLSFI).

This sequence belongs to the BCCT transporter (TC 2.A.15) family. CaiT subfamily. Homotrimer.

The protein localises to the cell inner membrane. The catalysed reaction is 4-(trimethylamino)butanoate(in) + (R)-carnitine(out) = 4-(trimethylamino)butanoate(out) + (R)-carnitine(in). The protein operates within amine and polyamine metabolism; carnitine metabolism. Functionally, catalyzes the exchange of L-carnitine for gamma-butyrobetaine. The polypeptide is L-carnitine/gamma-butyrobetaine antiporter (Escherichia coli O8 (strain IAI1)).